The following is a 67-amino-acid chain: Cell division protein ZapB (67 aa).

Positions 3–59 (LELLSKLETKIQAALETIELLKMELEEEKQTSSSLSEQNQQLQQELTSWNEKVTGLV) form a coiled coil.

The protein belongs to the ZapB family. As to quaternary structure, homodimer. The ends of the coiled-coil dimer bind to each other, forming polymers. Interacts with FtsZ.

The protein localises to the cytoplasm. In terms of biological role, non-essential, abundant cell division factor that is required for proper Z-ring formation. It is recruited early to the divisome by direct interaction with FtsZ, stimulating Z-ring assembly and thereby promoting cell division earlier in the cell cycle. Its recruitment to the Z-ring requires functional FtsA or ZipA. The chain is Cell division protein ZapB from Shewanella halifaxensis (strain HAW-EB4).